Consider the following 1209-residue polypeptide: Zinc finger protein 804A (1209 aa).

The C2H2-type zinc finger occupies 57 to 81; the sequence is FYCELCDKQYYKHQEFDNHINSYDH. Residues 380 to 394 are compositionally biased toward basic and acidic residues; it reads VKHNEASTTEVENKN. Disordered stretches follow at residues 380 to 401 and 792 to 860; these read VKHNEASTTEVENKNGPETLAP and PEEF…MKPQ. Basic residues predominate over residues 807-819; it reads KPKKKRRRKRGRF. Composition is skewed to basic and acidic residues over residues 826-836 and 848-860; these read LELKENTDYPV and LISEDKKEKMKPQ.

In Homo sapiens (Human), this protein is Zinc finger protein 804A (ZNF804A).